The chain runs to 117 residues: Large ribosomal subunit protein uL22 (117 aa).

It belongs to the universal ribosomal protein uL22 family. In terms of assembly, part of the 50S ribosomal subunit.

This protein binds specifically to 23S rRNA; its binding is stimulated by other ribosomal proteins, e.g. L4, L17, and L20. It is important during the early stages of 50S assembly. It makes multiple contacts with different domains of the 23S rRNA in the assembled 50S subunit and ribosome. Functionally, the globular domain of the protein is located near the polypeptide exit tunnel on the outside of the subunit, while an extended beta-hairpin is found that lines the wall of the exit tunnel in the center of the 70S ribosome. This Synechococcus elongatus (strain ATCC 33912 / PCC 7942 / FACHB-805) (Anacystis nidulans R2) protein is Large ribosomal subunit protein uL22.